A 196-amino-acid chain; its full sequence is Protein Flattop (196 aa).

The interval 107–196 (NGLRPEIFGK…PHAGRNLAEV (90 aa)) is disordered. The segment covering 113-124 (IFGKPHDPDSQK) has biased composition (basic and acidic residues). Residues 137-149 (APSPTIIPSSPAS) are compositionally biased toward low complexity. Residues 150-162 (NLSSPDQLQSSHP) are compositionally biased toward polar residues.

It belongs to the Flattop family. As to quaternary structure, microtubule inner protein component of sperm flagellar doublet microtubules. Interacts with DLG3. As to expression, expressed in trachea multiciliated cells.

It localises to the cytoplasm. It is found in the cytoskeleton. The protein resides in the cilium basal body. Its subcellular location is the cell projection. The protein localises to the cilium. It localises to the apical cell membrane. It is found in the cilium axoneme. The protein resides in the flagellum axoneme. Its function is as follows. Microtubule inner protein (MIP) part of the dynein-decorated doublet microtubules (DMTs) in cilia axoneme. Acts as a regulator of cilium basal body docking and positioning in mono- and multiciliated cells. Regulates basal body docking and cilia formation in multiciliated lung cells. Regulates kinocilium positioning and stereocilia bundle morphogenesis in the inner ear. The polypeptide is Protein Flattop (Bos taurus (Bovine)).